The following is a 243-amino-acid chain: Phosphoribosylaminoimidazole-succinocarboxamide synthase (243 aa).

The protein belongs to the SAICAR synthetase family.

It catalyses the reaction 5-amino-1-(5-phospho-D-ribosyl)imidazole-4-carboxylate + L-aspartate + ATP = (2S)-2-[5-amino-1-(5-phospho-beta-D-ribosyl)imidazole-4-carboxamido]succinate + ADP + phosphate + 2 H(+). The protein operates within purine metabolism; IMP biosynthesis via de novo pathway; 5-amino-1-(5-phospho-D-ribosyl)imidazole-4-carboxamide from 5-amino-1-(5-phospho-D-ribosyl)imidazole-4-carboxylate: step 1/2. The polypeptide is Phosphoribosylaminoimidazole-succinocarboxamide synthase (Lactiplantibacillus plantarum (strain ATCC BAA-793 / NCIMB 8826 / WCFS1) (Lactobacillus plantarum)).